Reading from the N-terminus, the 391-residue chain is 3-ketoacyl-CoA thiolase (391 aa).

Residue cysteine 95 is the Acyl-thioester intermediate of the active site. Active-site proton acceptor residues include histidine 347 and cysteine 377.

It belongs to the thiolase-like superfamily. Thiolase family. In terms of assembly, heterotetramer of two alpha chains (FadB) and two beta chains (FadA).

Its subcellular location is the cytoplasm. The catalysed reaction is an acyl-CoA + acetyl-CoA = a 3-oxoacyl-CoA + CoA. It functions in the pathway lipid metabolism; fatty acid beta-oxidation. In terms of biological role, catalyzes the final step of fatty acid oxidation in which acetyl-CoA is released and the CoA ester of a fatty acid two carbons shorter is formed. The sequence is that of 3-ketoacyl-CoA thiolase from Pseudomonas aeruginosa (strain UCBPP-PA14).